The sequence spans 769 residues: Neprilysin-21 (769 aa).

Residues 1–26 lie on the Cytoplasmic side of the membrane; it reads MKPENGAATWHPAKRSCLGRLTTLET. Residues 27–47 form a helical; Signal-anchor for type II membrane protein membrane-spanning segment; that stretch reads LLLVFLGLLITALLSVLFLWL. Topologically, residues 48–769 are extracellular; sequence WVLDGYKTFT…MNPERKCQVW (722 aa). Residue asparagine 69 is glycosylated (N-linked (GlcNAc...) asparagine). In terms of domain architecture, Peptidase M13 spans 85 to 769; sequence VCTSRECVRL…MNPERKCQVW (685 aa). Intrachain disulfides connect cysteine 86–cysteine 91, cysteine 109–cysteine 754, cysteine 117–cysteine 714, cysteine 173–cysteine 428, and cysteine 638–cysteine 766. N-linked (GlcNAc...) asparagine glycosylation is found at asparagine 221, asparagine 240, asparagine 272, asparagine 307, asparagine 356, asparagine 412, and asparagine 506. Histidine 601 contacts Zn(2+). Glutamate 602 is an active-site residue. Histidine 605 and glutamate 663 together coordinate Zn(2+). Residue aspartate 667 is the Proton donor of the active site. N-linked (GlcNAc...) asparagine glycans are attached at residues asparagine 684 and asparagine 698.

Belongs to the peptidase M13 family. Zn(2+) is required as a cofactor.

Its subcellular location is the cell membrane. In terms of biological role, probable cell surface protease. The chain is Neprilysin-21 (nep-21) from Caenorhabditis elegans.